The primary structure comprises 318 residues: 4-hydroxy-3-methylbut-2-enyl diphosphate reductase (318 aa).

Cys12 provides a ligand contact to [4Fe-4S] cluster. (2E)-4-hydroxy-3-methylbut-2-enyl diphosphate is bound by residues His41 and His74. 2 residues coordinate dimethylallyl diphosphate: His41 and His74. Isopentenyl diphosphate contacts are provided by His41 and His74. A [4Fe-4S] cluster-binding site is contributed by Cys96. Position 124 (His124) interacts with (2E)-4-hydroxy-3-methylbut-2-enyl diphosphate. A dimethylallyl diphosphate-binding site is contributed by His124. His124 provides a ligand contact to isopentenyl diphosphate. Glu126 acts as the Proton donor in catalysis. Thr168 is a binding site for (2E)-4-hydroxy-3-methylbut-2-enyl diphosphate. A [4Fe-4S] cluster-binding site is contributed by Cys198. (2E)-4-hydroxy-3-methylbut-2-enyl diphosphate-binding residues include Ser226, Ser227, Asn228, and Ser270. Positions 226, 227, 228, and 270 each coordinate dimethylallyl diphosphate. 4 residues coordinate isopentenyl diphosphate: Ser226, Ser227, Asn228, and Ser270.

Belongs to the IspH family. [4Fe-4S] cluster is required as a cofactor.

The catalysed reaction is isopentenyl diphosphate + 2 oxidized [2Fe-2S]-[ferredoxin] + H2O = (2E)-4-hydroxy-3-methylbut-2-enyl diphosphate + 2 reduced [2Fe-2S]-[ferredoxin] + 2 H(+). It carries out the reaction dimethylallyl diphosphate + 2 oxidized [2Fe-2S]-[ferredoxin] + H2O = (2E)-4-hydroxy-3-methylbut-2-enyl diphosphate + 2 reduced [2Fe-2S]-[ferredoxin] + 2 H(+). Its pathway is isoprenoid biosynthesis; dimethylallyl diphosphate biosynthesis; dimethylallyl diphosphate from (2E)-4-hydroxy-3-methylbutenyl diphosphate: step 1/1. It participates in isoprenoid biosynthesis; isopentenyl diphosphate biosynthesis via DXP pathway; isopentenyl diphosphate from 1-deoxy-D-xylulose 5-phosphate: step 6/6. Functionally, catalyzes the conversion of 1-hydroxy-2-methyl-2-(E)-butenyl 4-diphosphate (HMBPP) into a mixture of isopentenyl diphosphate (IPP) and dimethylallyl diphosphate (DMAPP). Acts in the terminal step of the DOXP/MEP pathway for isoprenoid precursor biosynthesis. The sequence is that of 4-hydroxy-3-methylbut-2-enyl diphosphate reductase from Psychrobacter sp. (strain PRwf-1).